We begin with the raw amino-acid sequence, 105 residues long: Large ribosomal subunit protein uL22 (105 aa).

It belongs to the universal ribosomal protein uL22 family. As to quaternary structure, part of the 50S ribosomal subunit.

Functionally, this protein binds specifically to 23S rRNA; its binding is stimulated by other ribosomal proteins, e.g. L4, L17, and L20. It is important during the early stages of 50S assembly. It makes multiple contacts with different domains of the 23S rRNA in the assembled 50S subunit and ribosome. In terms of biological role, the globular domain of the protein is located near the polypeptide exit tunnel on the outside of the subunit, while an extended beta-hairpin is found that lines the wall of the exit tunnel in the center of the 70S ribosome. The sequence is that of Large ribosomal subunit protein uL22 from Sulfurimonas denitrificans (strain ATCC 33889 / DSM 1251) (Thiomicrospira denitrificans (strain ATCC 33889 / DSM 1251)).